Here is a 561-residue protein sequence, read N- to C-terminus: Dihydroxy-acid dehydratase (561 aa).

Residue Cys50 coordinates [2Fe-2S] cluster. Position 82 (Asp82) interacts with Mg(2+). [2Fe-2S] cluster is bound at residue Cys123. Mg(2+) is bound by residues Asp124 and Lys125. Residue Lys125 is modified to N6-carboxylysine. A [2Fe-2S] cluster-binding site is contributed by Cys195. Glu447 is a Mg(2+) binding site. Residue Ser473 is the Proton acceptor of the active site.

This sequence belongs to the IlvD/Edd family. Homodimer. [2Fe-2S] cluster serves as cofactor. It depends on Mg(2+) as a cofactor.

It carries out the reaction (2R)-2,3-dihydroxy-3-methylbutanoate = 3-methyl-2-oxobutanoate + H2O. It catalyses the reaction (2R,3R)-2,3-dihydroxy-3-methylpentanoate = (S)-3-methyl-2-oxopentanoate + H2O. It functions in the pathway amino-acid biosynthesis; L-isoleucine biosynthesis; L-isoleucine from 2-oxobutanoate: step 3/4. The protein operates within amino-acid biosynthesis; L-valine biosynthesis; L-valine from pyruvate: step 3/4. Functions in the biosynthesis of branched-chain amino acids. Catalyzes the dehydration of (2R,3R)-2,3-dihydroxy-3-methylpentanoate (2,3-dihydroxy-3-methylvalerate) into 2-oxo-3-methylpentanoate (2-oxo-3-methylvalerate) and of (2R)-2,3-dihydroxy-3-methylbutanoate (2,3-dihydroxyisovalerate) into 2-oxo-3-methylbutanoate (2-oxoisovalerate), the penultimate precursor to L-isoleucine and L-valine, respectively. The chain is Dihydroxy-acid dehydratase from Crocosphaera subtropica (strain ATCC 51142 / BH68) (Cyanothece sp. (strain ATCC 51142)).